The chain runs to 728 residues: Elongation factor 2 (728 aa).

The tr-type G domain maps to 18–258; it reads KFIRNIGIVA…MVIRHLPSPI (241 aa). Residues 27–34, 93–97, and 147–150 each bind GTP; these read AHIDHGKT, DTPGH, and NKVD. H594 is modified (diphthamide).

The protein belongs to the TRAFAC class translation factor GTPase superfamily. Classic translation factor GTPase family. EF-G/EF-2 subfamily.

The protein localises to the cytoplasm. Its function is as follows. Catalyzes the GTP-dependent ribosomal translocation step during translation elongation. During this step, the ribosome changes from the pre-translocational (PRE) to the post-translocational (POST) state as the newly formed A-site-bound peptidyl-tRNA and P-site-bound deacylated tRNA move to the P and E sites, respectively. Catalyzes the coordinated movement of the two tRNA molecules, the mRNA and conformational changes in the ribosome. The sequence is that of Elongation factor 2 (fusA) from Archaeoglobus fulgidus (strain ATCC 49558 / DSM 4304 / JCM 9628 / NBRC 100126 / VC-16).